The sequence spans 680 residues: Serine/threonine-protein kinase YPK1 (680 aa).

Basic residues predominate over residues 1–11 (MYSWKSKFKFG). The segment at 1-117 (MYSWKSKFKF…GTPNDATSSS (117 aa)) is disordered. 2 stretches are compositionally biased toward basic and acidic residues: residues 12–21 (KSKEEKEAKH) and 41–56 (GEHD…DRKG). Thr57 carries the post-translational modification Phosphothreonine. Over residues 59–71 (NPSNSSVVPVRVS) the composition is skewed to low complexity. Residues Ser61, Ser64, and Ser71 each carry the phosphoserine modification. A compositionally biased stretch (polar residues) spans 73–83 (DASSSTSTVRD). Over residues 84–97 (SNGGNSENTNSSQN) the composition is skewed to low complexity. Positions 98–117 (LDETANIGSTGTPNDATSSS) are enriched in polar residues. A Phosphoserine modification is found at Ser170. One can recognise a Protein kinase domain in the interval 347-602 (FDLLKVIGKG…ADEIRNHPFF (256 aa)). Residues 353–361 (IGKGSFGKV) and Lys376 contribute to the ATP site. Catalysis depends on Asp470, which acts as the Proton acceptor. Thr502 carries the post-translational modification Phosphothreonine. Thr504 bears the Phosphothreonine; by PKH1 mark. In terms of domain architecture, AGC-kinase C-terminal spans 603–673 (SQLSWKRLLM…VGNEQLGSSM (71 aa)). Ser644 and Ser653 each carry phosphoserine. The residue at position 662 (Thr662) is a Phosphothreonine; by PKH1. Ser671 is subject to Phosphoserine.

The protein belongs to the protein kinase superfamily. AGC Ser/Thr protein kinase family. RAC subfamily. Autophosphorylated. Phytosphingosine level stimulates phosphorylation by PKH1. The N-terminal half is phosphorylated by FPK1. Phosphorylation is inhibited by exogenous addition of phytosphingosine.

The protein localises to the cytoplasm. It localises to the cell membrane. The enzyme catalyses L-seryl-[protein] + ATP = O-phospho-L-seryl-[protein] + ADP + H(+). The catalysed reaction is L-threonyl-[protein] + ATP = O-phospho-L-threonyl-[protein] + ADP + H(+). With respect to regulation, activated by phytosphingosine (PHS), a sphingoid long chain base. Activated by PKH1 phosphorylation. Plays an essential role in the proliferation of yeast cells. Involved in a signaling pathway, required for optimal cell wall integrity, that acts in parallel with the PKC1-SLT2-dependent pathway. Downstream kinase in the sphingolipid-mediated signaling pathway. Phosphorylation is regulated by the intracellular sphingolipid concentration. Disruption or inhibition of sphingolipid synthesis leads to the activation and phosphorylation of YPK1 through the TORC2 and PKH1 pathways, which in turn phosphorylates ORM1 and LAG1 to activate sphingolipid synthesis. Cooperates with SLI1 in mediating resistance to the sphingolipid biosynthesis inhibitor drug myriocin (ISP-1); kinase activity is essential for the resistance. Required for both receptor-mediated and fluid-phase endocytosis, but is not necessary for receptor phosphorylation or ubiquitination. Necessary for the internalization of plasma membrane proteins carrying different types of internalization signals. Acts downstream of the PKH kinases to control endocytosis by phosphorylating components of the endocytic machinery. Phosphorylation of residue Thr-504 in the activation loop and residue Thr-662 are essential for activity. Phosphorylates and down-regulates flippase activator FPK1. In Saccharomyces cerevisiae (strain ATCC 204508 / S288c) (Baker's yeast), this protein is Serine/threonine-protein kinase YPK1 (YPK1).